We begin with the raw amino-acid sequence, 353 residues long: GDSL esterase/lipase At5g03810 (353 aa).

Residues 1 to 24 (MKMFITMSMCLSVIACFYAGVGTG) form the signal peptide. The active-site Nucleophile is the Ser-37. 5 N-linked (GlcNAc...) asparagine glycosylation sites follow: Asn-100, Asn-255, Asn-256, Asn-260, and Asn-320. Residues Asp-328 and His-331 contribute to the active site.

It belongs to the 'GDSL' lipolytic enzyme family.

The protein localises to the secreted. The polypeptide is GDSL esterase/lipase At5g03810 (Arabidopsis thaliana (Mouse-ear cress)).